We begin with the raw amino-acid sequence, 112 residues long: MAMVYIKMSFHNTIVTVIDGRANVLSWCSSGVCKFKGRQKTTAFATKIVITRALKSVLERGFNGIDIKVSGPGFGRNVAIRAIIKMGFKVFSLKDITPLPYNGCRPRKRRRT.

It belongs to the universal ribosomal protein uS11 family. As to quaternary structure, part of the 30S ribosomal subunit.

It is found in the plastid. This is Small ribosomal subunit protein uS11c from Euglena longa (Euglenophycean alga).